The chain runs to 357 residues: Dual-specificity RNA methyltransferase RlmN (357 aa).

Residue Glu89 is the Proton acceptor of the active site. Positions 109 to 340 (EGEKYTVCVS…CTIRESKALD (232 aa)) constitute a Radical SAM core domain. An intrachain disulfide couples Cys116 to Cys345. Residues Cys123, Cys127, and Cys130 each contribute to the [4Fe-4S] cluster site. S-adenosyl-L-methionine contacts are provided by residues 173-174 (GE), Ser203, 226-228 (SLH), and Asn302. The S-methylcysteine intermediate role is filled by Cys345.

It belongs to the radical SAM superfamily. RlmN family. [4Fe-4S] cluster is required as a cofactor.

It localises to the cytoplasm. It carries out the reaction adenosine(2503) in 23S rRNA + 2 reduced [2Fe-2S]-[ferredoxin] + 2 S-adenosyl-L-methionine = 2-methyladenosine(2503) in 23S rRNA + 5'-deoxyadenosine + L-methionine + 2 oxidized [2Fe-2S]-[ferredoxin] + S-adenosyl-L-homocysteine. The catalysed reaction is adenosine(37) in tRNA + 2 reduced [2Fe-2S]-[ferredoxin] + 2 S-adenosyl-L-methionine = 2-methyladenosine(37) in tRNA + 5'-deoxyadenosine + L-methionine + 2 oxidized [2Fe-2S]-[ferredoxin] + S-adenosyl-L-homocysteine. Functionally, specifically methylates position 2 of adenine 2503 in 23S rRNA and position 2 of adenine 37 in tRNAs. m2A2503 modification seems to play a crucial role in the proofreading step occurring at the peptidyl transferase center and thus would serve to optimize ribosomal fidelity. The protein is Dual-specificity RNA methyltransferase RlmN of Helicobacter pylori (strain P12).